The following is a 1079-amino-acid chain: Electrogenic sodium bicarbonate cotransporter 1 (1079 aa).

Residues 1-62 (MEDEAVLDRG…EKREKERISE (62 aa)) form a required for interaction with AHCYL1 region. The Cytoplasmic segment spans residues 1–466 (MEDEAVLDRG…FASDFYDALN (466 aa)). A Phosphotyrosine modification is found at Y30. A compositionally biased stretch (basic residues) spans 39–52 (YRRRRRHKRKTGHK). Residues 39–78 (YRRRRRHKRKTGHKEKREKERISENYSDKSDVENADESSS) are disordered. T49 carries the post-translational modification Phosphothreonine; by PKA. A compositionally biased stretch (basic and acidic residues) spans 53–70 (EKREKERISENYSDKSDV). A phosphoserine mark is found at S61, S65, S68, S223, S232, S233, and S245. A disordered region spans residues 237–265 (MFTSPDNGSPAMTHRNLTSSSLNDISDKP). Phosphothreonine is present on residues T249 and T254. Over residues 251 to 260 (RNLTSSSLND) the composition is skewed to polar residues. Phosphoserine is present on residues S256, S257, and S262. The chain crosses the membrane as a helical span at residues 467 to 491 (IQSLSAILFIYLATVTNAITFGGLL). At 492–501 (GDATDNMQGV) the chain is on the extracellular side. A helical transmembrane segment spans residues 502–520 (LESFLGTAVSGAIFCLFAG). Position 521 (Q521) is a topological domain, cytoplasmic. A discontinuously helical membrane pass occupies residues 522–542 (PLTILSSTGPVLVFERLLFNF). The Extracellular portion of the chain corresponds to 543–550 (SKDHNFDY). A helical membrane pass occupies residues 551 to 571 (LEFRLWIGLWSAFLCLILVAT). Over 572–585 (DASFLVQYFTRFTE) the chain is Cytoplasmic. A helical membrane pass occupies residues 586–609 (EGFSSLISFIFIYDAFKKMIKLAD). The Extracellular portion of the chain corresponds to 610 to 692 (YYPINSDFKV…GNNCNFVPDV (83 aa)). Residues 693-710 (TLMSFILFLGTYTSSMAL) form a helical membrane-spanning segment. Residues 711–725 (KKFKTSRYFPTTARK) lie on the Cytoplasmic side of the membrane. Residues 726–745 (LISDFAIILSILIFCVIDAL) form a helical membrane-spanning segment. The Extracellular segment spans residues 746–779 (VGVDTPKLIVPSEFKPTSPNRGWFVPPFGGNPWW). The tract at residues 748 to 779 (VDTPKLIVPSEFKPTSPNRGWFVPPFGGNPWW) is interaction with CA4. The chain crosses the membrane as a helical span at residues 780–807 (VYLAAAIPALLVTILIFMDQQITAVIVN). Residues 808 to 819 (RKEHKLKKGAGY) lie on the Cytoplasmic side of the membrane. Residues 820–836 (HLDLFWVAILMVVCSFM) form a helical membrane-spanning segment. A837 is a topological domain (extracellular). The discontinuously helical transmembrane segment at 838–855 (LPWYVAATVISIAHIDSL) threads the bilayer. Topologically, residues 856 to 877 (KMETETSAPGEQPKFLGVREQR) are cytoplasmic. The chain crosses the membrane as a helical span at residues 878 to 894 (VTGTLVFILTGLSVFMA). Residues 895–901 (PILKFIP) are Extracellular-facing. The chain crosses the membrane as a helical span at residues 902–918 (MPVLYGVFLYMGVASLN). The Cytoplasmic segment spans residues 919 to 960 (GVQFMDRLKLLLMPLKHQPDFIYLRHVPLRRVHLFTFLQVLC). The segment at residues 961-986 (LALLWILKSTVAAIIFPVMILALVAV) is an intramembrane region (discontinuously helical). The Cytoplasmic segment spans residues 987–1079 (RKGMDYLFSQ…STFLERHTSC (93 aa)). Residues 1002-1004 (LDD) form a CA2-binding region. Residues 1012-1079 (KKKEDEKKKK…STFLERHTSC (68 aa)) form a disordered region. S1026 is subject to Phosphoserine; by PKA. S1029 bears the Phosphoserine mark. The segment at 1030-1033 (DNDD) is CA2-binding. Phosphoserine is present on residues S1034 and S1044. The tract at residues 1057–1059 (FLS) is required for basolateral targeting. The span at 1062-1079 (KPSDREKSSTFLERHTSC) shows a compositional bias: basic and acidic residues. S1069 is modified (phosphoserine).

This sequence belongs to the anion exchanger (TC 2.A.31) family. In terms of assembly, homodimer. Interacts with CA2/carbonic anhydrase 2 and CA4/carbonic anhydrase 4 which may regulate transporter activity. Isoform 1 but not isoform 2 interacts with AHCYL1 (via PEST domain when phosphorylated); the interaction increases SLC4A4 isoform 1 activity. Interacts with AHCYL2. In terms of processing, phosphorylation of Ser-1026 by PKA increases the binding of CA2 and changes the Na(+):HCO3(-) stoichiometry of the transporter from 3:1 to 2:1. Phosphorylated in presence of STK39 and dephosphorylated in presence of PP1 phosphatase; phosphorylation seems to inhibit SLC4A4 activity. Post-translationally, N-glycosylated. May not be necessary for the transporter basic functions. As to expression, expressed in colonic mucosa, kidney cortex and to gastric mucosa.

It is found in the basolateral cell membrane. The protein localises to the cell membrane. The catalysed reaction is 2 hydrogencarbonate(out) + Na(+)(out) = 2 hydrogencarbonate(in) + Na(+)(in). It catalyses the reaction 3 hydrogencarbonate(out) + Na(+)(out) = 3 hydrogencarbonate(in) + Na(+)(in). Electrogenic sodium/bicarbonate cotransporter with a Na(+):HCO3(-) stoichiometry varying from 1:2 to 1:3. May regulate bicarbonate influx/efflux at the basolateral membrane of cells and regulate intracellular pH. The polypeptide is Electrogenic sodium bicarbonate cotransporter 1 (SLC4A4) (Oryctolagus cuniculus (Rabbit)).